The primary structure comprises 87 residues: Putative phytosulfokines 4 (87 aa).

Residues 1 to 23 form the signal peptide; the sequence is MANLSTLITIALLLCATMLTCSA. Residues 24–77 constitute a propeptide that is removed on maturation; sequence RPEPAYFASFTTSPADTLSLEMIESKLHEVAGESCDKEDDEDCLVRRTLTAHLD. 2 positions are modified to sulfotyrosine: tyrosine 78 and tyrosine 80. Positions 83-87 are excised as a propeptide; the sequence is KNNHH.

The protein belongs to the phytosulfokine family. Post-translationally, sulfation is important for activity and for the binding to a putative membrane receptor.

The protein resides in the secreted. Promotes plant cell differentiation, organogenesis and somatic embryogenesis as well as cell proliferation. The protein is Putative phytosulfokines 4 (PSK4) of Arabidopsis thaliana (Mouse-ear cress).